Reading from the N-terminus, the 1134-residue chain is Myosin-4 (1134 aa).

Residues 110–160 form the Myosin N-terminal SH3-like domain; that stretch reads REKLCVWCRVAANGQWHLGKIHSTSSSDDVCVMLSANDDVRTMEEIFPANP. Residues 164–830 enclose the Myosin motor domain; sequence EGVEDLTQLS…VISVLEERKK (667 aa). Residues 255 to 262 and 304 to 312 contribute to the ATP site; these read GESGAGKT and NDNSSRFGK. 2 actin-binding regions span residues 589–623 and 710–732; these read LIEK…KQHL and LFKL…KPNS. 3 IQ domains span residues 832-861, 855-884, and 891-920; these read VLRG…AAVI, MRNA…SAIV, and ELDA…KNKP. The disordered stretch occupies residues 913–939; it reads STQQKNKPRNEKKKTRRKSTKRVSEDK. Over residues 918 to 933 the composition is skewed to basic residues; it reads NKPRNEKKKTRRKSTK. A coiled-coil region spans residues 953–999; the sequence is LADLQSRVLKVEAAIMQKEDENTALQEELQRFEERWLENETRMKSME.

This sequence belongs to the TRAFAC class myosin-kinesin ATPase superfamily. Myosin family. Plant myosin class VIII subfamily. As to quaternary structure, homodimer.

In terms of biological role, myosin heavy chain that is required for the cell cycle-regulated transport of various organelles and proteins for their segregation. Functions by binding with its tail domain to receptor proteins on organelles and exerting force with its N-terminal motor domain against actin filaments, thereby transporting its cargo along polarized actin cables. The chain is Myosin-4 (VIII-B) from Arabidopsis thaliana (Mouse-ear cress).